We begin with the raw amino-acid sequence, 143 residues long: UPF0201 protein Pcal_0593 (143 aa).

It belongs to the UPF0201 family.

In Pyrobaculum calidifontis (strain DSM 21063 / JCM 11548 / VA1), this protein is UPF0201 protein Pcal_0593.